A 147-amino-acid chain; its full sequence is Protein phosphatase 1 regulatory subunit 14A (147 aa).

Residues 1-11 are compositionally biased toward basic residues; that stretch reads MAAQRLGKRVL. Residues 1 to 37 form a disordered region; sequence MAAQRLGKRVLSKLQSPSRARGPGGSPSGLQKRHARV. The residue at position 26 (serine 26) is a Phosphoserine. Residues 35–120 are inhibitory; the sequence is ARVTVKYDRR…LLAKLRGLHK (86 aa). The residue at position 38 (threonine 38) is a Phosphothreonine. A disordered region spans residues 118–147; the sequence is LHKQPGFPQPSPSDDPSLSPRQDPAHTAPP. 3 positions are modified to phosphoserine: serine 128, serine 134, and serine 136.

The protein belongs to the PP1 inhibitor family.

The protein localises to the cytoplasm. In terms of biological role, inhibitor of PPP1CA. Has over 1000-fold higher inhibitory activity when phosphorylated, creating a molecular switch for regulating the phosphorylation status of PPP1CA substrates and smooth muscle contraction. The sequence is that of Protein phosphatase 1 regulatory subunit 14A (Ppp1r14a) from Rattus norvegicus (Rat).